Reading from the N-terminus, the 1477-residue chain is Ring canal kelch protein (1477 aa).

3 disordered regions span residues 19 to 62 (LSNG…PGLG), 76 to 96 (LLQQQQQQHHHHQNPAAEGSG), and 108 to 137 (SQNSLDESSQKHVQRPNGKERGTVGQYSNE). Residues 20–46 (SNGNSNNNNQQQQQQQQGQNPQQPAQN) are compositionally biased toward low complexity. A phosphoserine mark is found at S108 and S111. The region spanning 157-223 (CDVILVADDV…VYTATVEVNE (67 aa)) is the BTB domain. Kelch repeat units lie at residues 404–449 (ILLV…VLGD), 450–496 (KVYA…VLNG), 498–543 (IYAV…VVHG), 545–592 (LYAV…VLNN), 594–639 (LYAV…AHDG), and 641–687 (LYVV…MIDK). U690 is a non-standard amino acid (selenocysteine). 5 disordered regions span residues 744-841 (PAAP…PQRI), 1119-1200 (HSAA…GNGT), 1291-1326 (RDANASARPLHSTLSRLRNGEKRNPNRVAGNYQYED), 1359-1416 (PLLQ…FKPK), and 1446-1477 (PVSLSDNETETTSSQNNLPSTTNSNNLNEHND). Composition is skewed to low complexity over residues 763-813 (APIG…ANNN) and 820-839 (AAPAPSQQQQQQQAQPQQPQ). Positions 1125–1137 (IPSSSNINANRTT) are enriched in polar residues. The segment covering 1166–1192 (KTTSTGSGKSVTLAKKTSTAAARSSSS) has biased composition (low complexity). Low complexity-rich tracts occupy residues 1374-1391 (QQRRLQRQGAQAQQQSQQ) and 1456-1477 (TTSSQNNLPSTTNSNNLNEHND).

Both proteins are expressed in ovaries, male testis, ovariectomized females, cuticle, salivary gland and imaginal disks. Kelch short protein is the predominant form and is also expressed in fat bodies. On entry into metamorphosis levels of full-length protein increase in testis and imaginal disks.

It is found in the cytoplasm. Its subcellular location is the cytoskeleton. Functionally, component of ring canals that regulates the flow of cytoplasm between cells. May be involved in the regulation of cytoplasm flow from nurse cells to the oocyte during oogenesis. Binds actin. This is Ring canal kelch protein (kel) from Drosophila melanogaster (Fruit fly).